The sequence spans 187 residues: Elongation factor P (187 aa).

This sequence belongs to the elongation factor P family.

The protein resides in the cytoplasm. Its pathway is protein biosynthesis; polypeptide chain elongation. Functionally, involved in peptide bond synthesis. Stimulates efficient translation and peptide-bond synthesis on native or reconstituted 70S ribosomes in vitro. Probably functions indirectly by altering the affinity of the ribosome for aminoacyl-tRNA, thus increasing their reactivity as acceptors for peptidyl transferase. The polypeptide is Elongation factor P (Magnetococcus marinus (strain ATCC BAA-1437 / JCM 17883 / MC-1)).